The chain runs to 172 residues: Type II secretion system protein H (172 aa).

Residues 1–6 (MRASRG) constitute a propeptide, leader sequence. N-methylphenylalanine is present on Phe-7. Residues 7–27 (FTLIELMVVMVIISVLIGLAV) form a helical membrane-spanning segment.

This sequence belongs to the GSP H family. Type II secretion is composed of four main components: the outer membrane complex, the inner membrane complex, the cytoplasmic secretion ATPase and the periplasm-spanning pseudopilus. Forms the tip of the type II pseudopilus by interacting with XcpV, XcpW and XcpX. Interacts with core component XcpT. Cleaved by prepilin peptidase. In terms of processing, methylated by prepilin peptidase at the amino group of the N-terminal phenylalanine once the leader sequence is cleaved by prepilin peptidase.

Its subcellular location is the cell inner membrane. Component of the type II secretion system required for the energy-dependent secretion of extracellular factors such as proteases and toxins from the periplasm. Part of the pseudopilus tip complex that is critical for the recognition and binding of secretion substrates. Type II pseudopilus confers increased bacterial adhesive capabilities. The protein is Type II secretion system protein H (xcpU) of Pseudomonas aeruginosa (strain ATCC 15692 / DSM 22644 / CIP 104116 / JCM 14847 / LMG 12228 / 1C / PRS 101 / PAO1).